The sequence spans 418 residues: Centromere protein U (418 aa).

Positions 1–11 (MAPRGRRRPRP) are enriched in basic residues. Positions 1–76 (MAPRGRRRPR…TYETFDPPLH (76 aa)) are disordered. Residues 6 to 23 (RRRPRPHRSEGARRSKNT) carry the Nuclear localization signal motif. The span at 12–42 (HRSEGARRSKNTLERTHSMKDKAGQKCKPID) shows a compositional bias: basic and acidic residues. Position 78 is a phosphothreonine; by PLK1 (Thr78). A disordered region spans residues 88-227 (SKHCGLSLSS…KRKKSRSKAI (140 aa)). At Thr98 the chain carries Phosphothreonine. Ser108 is subject to Phosphoserine. A Phosphothreonine modification is found at Thr110. A phosphoserine mark is found at Ser111, Ser116, and Ser120. Positions 124-133 (SAKKPGRKLR) are enriched in basic residues. Residues Ser136, Ser139, and Ser141 each carry the phosphoserine modification. The segment covering 145-165 (SDTRRKVKSAEKISTQRHEVI) has biased composition (basic and acidic residues). The segment covering 180–193 (SVTSKKTGPLSAQP) has biased composition (polar residues). Residue Lys185 forms a Glycyl lysine isopeptide (Lys-Gly) (interchain with G-Cter in SUMO2) linkage. 2 positions are modified to phosphoserine: Ser190 and Ser194. Residues 208–224 (TQKKGKISHDKRKKSRS) are compositionally biased toward basic residues. Phosphoserine is present on Ser232. 2 coiled-coil regions span residues 297 to 356 (QMLT…NAAY) and 397 to 417 (LLGA…LLDQ). A Nuclear localization signal motif is present at residues 303 to 320 (KRKNAKMISDIEKKRQRM).

The protein belongs to the CENP-U/AME1 family. Component of the CENPA-NAC complex, at least composed of CENPA, CENPC, CENPH, CENPM, CENPN, CENPT and CENPU. The CENPA-NAC complex interacts with the CENPA-CAD complex, composed of CENPI, CENPK, CENPL, CENPO, CENPP, CENPQ, CENPR and CENPS. Interacts with MLF1. Interacts with PLK1. In terms of assembly, (Microbial infection) Interacts with the N-terminal domain of Kaposi's sarcoma-associated herpesvirus latent nuclear antigen (LNA). Post-translationally, phosphorylated by PLK1 at Thr-78, creating a self-tethering site that specifically interacts with the polo-box domain of PLK1. In terms of tissue distribution, expressed at high levels in the testis, fetal liver, thymus, bone marrow and at lower levels in the lymph nodes, placenta, colon and spleen. Present in all cell lines examined, including B-cells, T-cells, epithelial cells and fibroblast cells. Expressed at high levels in glioblastoma cell lines.

The protein localises to the cytoplasm. It is found in the nucleus. It localises to the chromosome. The protein resides in the centromere. Its subcellular location is the kinetochore. In terms of biological role, component of the CENPA-NAC (nucleosome-associated) complex, a complex that plays a central role in assembly of kinetochore proteins, mitotic progression and chromosome segregation. The CENPA-NAC complex recruits the CENPA-CAD (nucleosome distal) complex and may be involved in incorporation of newly synthesized CENPA into centromeres. Plays an important role in the correct PLK1 localization to the mitotic kinetochores. A scaffold protein responsible for the initial recruitment and maintenance of the kinetochore PLK1 population until its degradation. Involved in transcriptional repression. This chain is Centromere protein U (CENPU), found in Homo sapiens (Human).